The chain runs to 124 residues: UPF0225 protein SCO1677 (124 aa).

It belongs to the UPF0225 family.

The polypeptide is UPF0225 protein SCO1677 (Streptomyces coelicolor (strain ATCC BAA-471 / A3(2) / M145)).